Reading from the N-terminus, the 629-residue chain is UvrABC system protein C (629 aa).

Positions 12 to 91 (DRPGCYLFKD…IKKHKPKYNI (80 aa)) constitute a GIY-YIG domain. The 36-residue stretch at 200–235 (QEVLERLRARMEQAAERLEFERAAELRDQIRAIEKV) folds into the UVR domain.

It belongs to the UvrC family. In terms of assembly, interacts with UvrB in an incision complex.

The protein resides in the cytoplasm. The UvrABC repair system catalyzes the recognition and processing of DNA lesions. UvrC both incises the 5' and 3' sides of the lesion. The N-terminal half is responsible for the 3' incision and the C-terminal half is responsible for the 5' incision. The chain is UvrABC system protein C from Symbiobacterium thermophilum (strain DSM 24528 / JCM 14929 / IAM 14863 / T).